The primary structure comprises 146 residues: Hemoglobin subunit delta (146 aa).

One can recognise a Globin domain in the interval His-2–His-146. Phosphoserine is present on Ser-50. Heme b-binding residues include His-63 and His-92.

It belongs to the globin family. In terms of assembly, heterotetramer of two delta chains and two alpha chains. In terms of tissue distribution, red blood cells.

This Leontocebus nigricollis (Black-mantled tamarin) protein is Hemoglobin subunit delta (HBD).